A 350-amino-acid polypeptide reads, in one-letter code: Histidinol-phosphate aminotransferase 2 (350 aa).

K210 is subject to N6-(pyridoxal phosphate)lysine.

The protein belongs to the class-II pyridoxal-phosphate-dependent aminotransferase family. Histidinol-phosphate aminotransferase subfamily. Homodimer. Pyridoxal 5'-phosphate serves as cofactor.

It carries out the reaction L-histidinol phosphate + 2-oxoglutarate = 3-(imidazol-4-yl)-2-oxopropyl phosphate + L-glutamate. It functions in the pathway amino-acid biosynthesis; L-histidine biosynthesis; L-histidine from 5-phospho-alpha-D-ribose 1-diphosphate: step 7/9. The chain is Histidinol-phosphate aminotransferase 2 from Mannheimia succiniciproducens (strain KCTC 0769BP / MBEL55E).